A 97-amino-acid polypeptide reads, in one-letter code: Acylphosphatase (97 aa).

The Acylphosphatase-like domain occupies 5-92 (RAHVWISGRV…GEFVRFEITF (88 aa)). Catalysis depends on residues R20 and N38.

Belongs to the acylphosphatase family.

It carries out the reaction an acyl phosphate + H2O = a carboxylate + phosphate + H(+). The chain is Acylphosphatase (acyP) from Syntrophobacter fumaroxidans (strain DSM 10017 / MPOB).